The chain runs to 608 residues: Centromere DNA-binding protein complex CBF3 subunit B (608 aa).

Residues 14–42 (CSVCTRRKVKCDRMIPCGNCRKRGQDSEC) constitute a DNA-binding region (zn(2)-C6 fungal-type). S575 bears the Phosphoserine mark.

As to quaternary structure, component of the CBF3 copmplex, which is formed of CBF3A/CBF2, CBF3B/CEP3, CBF3C/CTF13 and CBF3D.

The protein resides in the nucleus. It is found in the chromosome. Its subcellular location is the centromere. Its function is as follows. Acts as a component of the centromere DNA-binding protein complex CBF3, which is essential for chromosome segregation and movement of centromeres along microtubules. CBF3 is required for the recruitment of other kinetochore complexes to CEN DNA. It plays a role in the attachment of chromosomes to the spindle and binds selectively to a highly conserved DNA sequence called CDEIII, found in centromers and in several promoters. This Saccharomyces cerevisiae (strain ATCC 204508 / S288c) (Baker's yeast) protein is Centromere DNA-binding protein complex CBF3 subunit B (CEP3).